A 265-amino-acid chain; its full sequence is Very long chain fatty acid elongase 6 (265 aa).

An N-linked (GlcNAc...) asparagine glycan is attached at Asn2. 7 helical membrane passes run 34–51 (FLFS…RHLM), 70–90 (LAVF…YILM), 111–131 (FWAY…IFII), 137–156 (LIFL…WYSY), 159–179 (MVAG…VMYS), 197–217 (FITL…YLVF), and 232–252 (IIWS…FFFE).

The protein belongs to the ELO family. ELOVL6 subfamily. N-Glycosylated.

It is found in the endoplasmic reticulum membrane. It carries out the reaction a very-long-chain acyl-CoA + malonyl-CoA + H(+) = a very-long-chain 3-oxoacyl-CoA + CO2 + CoA. The catalysed reaction is hexadecanoyl-CoA + malonyl-CoA + H(+) = 3-oxooctadecanoyl-CoA + CO2 + CoA. It catalyses the reaction (9Z)-hexadecenoyl-CoA + malonyl-CoA + H(+) = 3-oxo-(11Z)-octadecenoyl-CoA + CO2 + CoA. The enzyme catalyses dodecanoyl-CoA + malonyl-CoA + H(+) = 3-oxotetradecanoyl-CoA + CO2 + CoA. It carries out the reaction tetradecanoyl-CoA + malonyl-CoA + H(+) = 3-oxohexadecanoyl-CoA + CO2 + CoA. The catalysed reaction is (9Z)-octadecenoyl-CoA + malonyl-CoA + H(+) = 3-oxo-(11Z)-eicosenoyl-CoA + CO2 + CoA. It catalyses the reaction (9Z,12Z)-octadecadienoyl-CoA + malonyl-CoA + H(+) = (11Z,14Z)-3-oxoicosa-11,14-dienoyl-CoA + CO2 + CoA. The enzyme catalyses (9Z,12Z,15Z)-octadecatrienoyl-CoA + malonyl-CoA + H(+) = (11Z,14Z,17Z)-3-oxoeicosatrienoyl-CoA + CO2 + CoA. It participates in lipid metabolism; fatty acid biosynthesis. Its activity is regulated as follows. The reaction is stimulated by the presence of HSD17B12, the enzyme catalyzing the second step of the elongation cycle. Catalyzes the first and rate-limiting reaction of the four reactions that constitute the long-chain fatty acids elongation cycle. This endoplasmic reticulum-bound enzymatic process allows the addition of 2 carbons to the chain of long- and very long-chain fatty acids (VLCFAs) per cycle. Condensing enzyme that elongates fatty acids with 12, 14 and 16 carbons with higher activity toward C16:0 acyl-CoAs. Catalyzes the synthesis of unsaturated C16 long chain fatty acids and, to a lesser extent, C18:0 and those with low desaturation degree. May participate in the production of saturated and monounsaturated VLCFAs of different chain lengths that are involved in multiple biological processes as precursors of membrane lipids and lipid mediators. This Gallus gallus (Chicken) protein is Very long chain fatty acid elongase 6.